Consider the following 490-residue polypeptide: ATP synthase subunit beta, chloroplastic (490 aa).

At threonine 6 the chain carries Phosphothreonine. The residue at position 13 (serine 13) is a Phosphoserine. 172–179 (GGAGVGKT) is an ATP binding site.

The protein belongs to the ATPase alpha/beta chains family. F-type ATPases have 2 components, CF(1) - the catalytic core - and CF(0) - the membrane proton channel. CF(1) has five subunits: alpha(3), beta(3), gamma(1), delta(1), epsilon(1). CF(0) has four main subunits: a(1), b(1), b'(1) and c(9-12).

The protein resides in the plastid. The protein localises to the chloroplast thylakoid membrane. It catalyses the reaction ATP + H2O + 4 H(+)(in) = ADP + phosphate + 5 H(+)(out). In terms of biological role, produces ATP from ADP in the presence of a proton gradient across the membrane. The catalytic sites are hosted primarily by the beta subunits. This Aethionema grandiflorum (Persian stone-cress) protein is ATP synthase subunit beta, chloroplastic.